The primary structure comprises 121 residues: Centrocin 2 (121 aa).

A signal peptide spans 1-20; it reads MMIKIAVVLCAVMATSMVFA. Residues 21–50 constitute a propeptide that is removed on maturation; the sequence is NDVKEQELADLLDLLISEEVSSPDDAVAES. 2 positions are modified to 6'-bromotryptophan: Trp-51 and Trp-59. An intrachain disulfide couples Cys-77 to Cys-112. Residues 83–106 constitute a propeptide that is removed on maturation; it reads SPQEARAKVLEAFPEMKESDLDEE. Residue Gln-107 is modified to Pyrrolidone carboxylic acid. His-119 carries the post-translational modification Histidine amide.

In terms of assembly, heterodimer of a light and a heavy chain, probably disulfide-linked.

Functionally, has antimicrobial activity against Gram-negative bacteria, Gram-positive bacteria and against fungi with minimum inhibitory concentration (MIC) between 0.78 uM and 50 uM. Shows little hemolytic activity at concentrations up to 12.5 uM but &gt;50% lysis at 100 uM. This Echinus esculentus (Sea urchin) protein is Centrocin 2.